The following is a 90-amino-acid chain: Small ribosomal subunit protein bS20 (90 aa).

This sequence belongs to the bacterial ribosomal protein bS20 family.

Binds directly to 16S ribosomal RNA. This is Small ribosomal subunit protein bS20 from Francisella tularensis subsp. holarctica (strain FTNF002-00 / FTA).